The primary structure comprises 343 residues: Anthranilate phosphoribosyltransferase (343 aa).

5-phospho-alpha-D-ribose 1-diphosphate-binding positions include G84, 87 to 88 (GD), T92, 94 to 97 (NIST), 112 to 120 (KHGNRGVSS), and S124. G84 contacts anthranilate. S96 contributes to the Mg(2+) binding site. N115 contacts anthranilate. An anthranilate-binding site is contributed by R170. 2 residues coordinate Mg(2+): D229 and E230.

Belongs to the anthranilate phosphoribosyltransferase family. Homodimer. Mg(2+) is required as a cofactor.

It catalyses the reaction N-(5-phospho-beta-D-ribosyl)anthranilate + diphosphate = 5-phospho-alpha-D-ribose 1-diphosphate + anthranilate. Its pathway is amino-acid biosynthesis; L-tryptophan biosynthesis; L-tryptophan from chorismate: step 2/5. Functionally, catalyzes the transfer of the phosphoribosyl group of 5-phosphorylribose-1-pyrophosphate (PRPP) to anthranilate to yield N-(5'-phosphoribosyl)-anthranilate (PRA). This Burkholderia multivorans (strain ATCC 17616 / 249) protein is Anthranilate phosphoribosyltransferase.